Reading from the N-terminus, the 1439-residue chain is Myomesin-3 (1439 aa).

A disordered region spans residues 1-57; the sequence is MTLPHSPGSAGEPQASQTVQVHRLEHRQEEEQKEERQHSLQMGSSVQRRTYRSSEEE. The segment covering 22–38 has biased composition (basic and acidic residues); sequence HRLEHRQEEEQKEERQH. The segment covering 39–48 has biased composition (polar residues); it reads SLQMGSSVQR. The stretch at 119–149 forms a coiled coil; sequence QRLLRQRRDWKALRQRTEEKVREAKELIELC. Ig-like C2-type domains lie at 154–246 and 269–362; these read PWFW…AKVL and PSAE…AYVF. Fibronectin type-III domains lie at 376-471, 504-599, 605-698, 704-799, and 806-901; these read SPLN…TGDY, APTN…LKGK, PPAQ…VKQA, APYD…CKEW, and PPYD…LEDK. Ig-like C2-type domains lie at 1122-1207 and 1336-1425; these read PYFQ…LDLT and AKVV…VTIS.

Homodimer. In terms of tissue distribution, mainly expressed in slow muscle, extraocular muscle and embryonic/neonatal skeletal muscle (at protein level). Expression in skeletal muscle is fiber type specific, with the highest levels in type IIA fibers (intermediate speed) and lower levels in type I fibers.

It localises to the cytoplasm. The protein localises to the myofibril. The protein resides in the sarcomere. It is found in the m line. Functionally, may link the intermediate filament cytoskeleton to the M-disk of the myofibrils in striated muscle. The sequence is that of Myomesin-3 (Myom3) from Mus musculus (Mouse).